A 325-amino-acid polypeptide reads, in one-letter code: Tetraacyldisaccharide 4'-kinase (325 aa).

Position 55-62 (55-62) interacts with ATP; the sequence is TAGGNGKT.

The protein belongs to the LpxK family.

It catalyses the reaction a lipid A disaccharide + ATP = a lipid IVA + ADP + H(+). It functions in the pathway glycolipid biosynthesis; lipid IV(A) biosynthesis; lipid IV(A) from (3R)-3-hydroxytetradecanoyl-[acyl-carrier-protein] and UDP-N-acetyl-alpha-D-glucosamine: step 6/6. In terms of biological role, transfers the gamma-phosphate of ATP to the 4'-position of a tetraacyldisaccharide 1-phosphate intermediate (termed DS-1-P) to form tetraacyldisaccharide 1,4'-bis-phosphate (lipid IVA). The polypeptide is Tetraacyldisaccharide 4'-kinase (Salmonella paratyphi B (strain ATCC BAA-1250 / SPB7)).